The primary structure comprises 404 residues: Keratin, type I cuticular Ha3-I (404 aa).

The segment at Met1–Glu56 is head. In terms of domain architecture, IF rod spans Glu56–Leu367. The interval Lys57 to Arg91 is coil 1A. Positions Asn92 to Ala102 are linker 1. Residues Tyr103–Cys203 form a coil 1B region. Residues Gln204–Val219 are linker 12. The interval Asp220–Glu363 is coil 2. The tail stretch occupies residues Asp364 to Arg404.

It belongs to the intermediate filament family.

This is Keratin, type I cuticular Ha3-I from Mus musculus (Mouse).